The following is a 65-amino-acid chain: Adrenergic toxin rho-elapitoxin-Dp1a (65 aa).

4 disulfide bridges follow: Cys3–Cys24, Cys17–Cys42, Cys46–Cys57, and Cys58–Cys63.

It belongs to the three-finger toxin family. Short-chain subfamily. Aminergic toxin sub-subfamily. As to expression, expressed by the venom gland.

It localises to the secreted. Its function is as follows. This toxin shows activities on different G-protein coupled receptors. It is highly potent on various alpha-adrenoceptors (ADRA) (subnanomolar affinity for ADRA1A). Order of potency is the following: ADRA1A &gt; ADRA1B &gt; ADRA1D &gt; ADRA2C. It is also found to reversibly bind to muscarinic acetylcholine receptors (CHRM), but the affinity is much weaker (CHRM1 and CHRM2, Ki&gt;1 uM; CHRM3, Ki=140 nM; CHRM4, Ki=120 nM; CHRM5, Ki=350 nM). The protein is Adrenergic toxin rho-elapitoxin-Dp1a of Dendroaspis polylepis polylepis (Black mamba).